Here is a 689-residue protein sequence, read N- to C-terminus: DNA ligase (689 aa).

NAD(+) contacts are provided by residues 40–44 (DSEYD), 89–90 (SL), and Glu121. Lys123 (N6-AMP-lysine intermediate) is an active-site residue. NAD(+) contacts are provided by Arg144, Glu179, Lys295, and Lys319. Zn(2+) contacts are provided by Cys413, Cys416, Cys431, and Cys437. The 80-residue stretch at 610 to 689 (REQNILTGKI…VEWLAFIKNA (80 aa)) folds into the BRCT domain.

It belongs to the NAD-dependent DNA ligase family. LigA subfamily. Mg(2+) is required as a cofactor. The cofactor is Mn(2+).

The catalysed reaction is NAD(+) + (deoxyribonucleotide)n-3'-hydroxyl + 5'-phospho-(deoxyribonucleotide)m = (deoxyribonucleotide)n+m + AMP + beta-nicotinamide D-nucleotide.. DNA ligase that catalyzes the formation of phosphodiester linkages between 5'-phosphoryl and 3'-hydroxyl groups in double-stranded DNA using NAD as a coenzyme and as the energy source for the reaction. It is essential for DNA replication and repair of damaged DNA. The protein is DNA ligase of Rickettsia prowazekii (strain Madrid E).